A 119-amino-acid chain; its full sequence is Large ribosomal subunit protein uL18 (119 aa).

It belongs to the universal ribosomal protein uL18 family. In terms of assembly, part of the 50S ribosomal subunit; part of the 5S rRNA/L5/L18/L25 subcomplex. Contacts the 5S and 23S rRNAs.

Functionally, this is one of the proteins that bind and probably mediate the attachment of the 5S RNA into the large ribosomal subunit, where it forms part of the central protuberance. This chain is Large ribosomal subunit protein uL18, found in Xanthomonas campestris pv. campestris (strain 8004).